The primary structure comprises 336 residues: Inositol 2-dehydrogenase (336 aa).

This sequence belongs to the Gfo/Idh/MocA family. In terms of assembly, homotetramer.

The enzyme catalyses myo-inositol + NAD(+) = scyllo-inosose + NADH + H(+). Its function is as follows. Involved in the oxidation of myo-inositol (MI) to 2-keto-myo-inositol (2KMI or 2-inosose). The sequence is that of Inositol 2-dehydrogenase from Pseudomonas fluorescens (strain ATCC BAA-477 / NRRL B-23932 / Pf-5).